Here is an 84-residue protein sequence, read N- to C-terminus: Putative membrane protein insertion efficiency factor (84 aa).

This sequence belongs to the UPF0161 family.

Its subcellular location is the cell membrane. Its function is as follows. Could be involved in insertion of integral membrane proteins into the membrane. The sequence is that of Putative membrane protein insertion efficiency factor from Staphylococcus carnosus (strain TM300).